A 462-amino-acid chain; its full sequence is Chromosomal replication initiator protein DnaA (462 aa).

A domain I, interacts with DnaA modulators region spans residues 1–84 (MAVSLWQQCI…RFDIGSRPSA (84 aa)). A domain II region spans residues 84-125 (APKPIQATAAVVKPKLESSPQKSQTSFNVNAPEPAATANHRS). The segment at 126-342 (NINPTYQFEN…GALNRVIANA (217 aa)) is domain III, AAA+ region. Gly170, Gly172, Lys173, and Thr174 together coordinate ATP. The segment at 343–462 (NFTGRPITID…YANLIRTLSS (120 aa)) is domain IV, binds dsDNA.

Belongs to the DnaA family. As to quaternary structure, oligomerizes as a right-handed, spiral filament on DNA at oriC.

It localises to the cytoplasm. Functionally, plays an essential role in the initiation and regulation of chromosomal replication. ATP-DnaA binds to the origin of replication (oriC) to initiate formation of the DNA replication initiation complex once per cell cycle. Binds the DnaA box (a 9 base pair repeat at the origin) and separates the double-stranded (ds)DNA. Forms a right-handed helical filament on oriC DNA; dsDNA binds to the exterior of the filament while single-stranded (ss)DNA is stabiized in the filament's interior. The ATP-DnaA-oriC complex binds and stabilizes one strand of the AT-rich DNA unwinding element (DUE), permitting loading of DNA polymerase. After initiation quickly degrades to an ADP-DnaA complex that is not apt for DNA replication. Binds acidic phospholipids. In Shewanella woodyi (strain ATCC 51908 / MS32), this protein is Chromosomal replication initiator protein DnaA.